Reading from the N-terminus, the 336-residue chain is Nuclear envelope-associated protein 3 (336 aa).

Coiled-coil stretches lie at residues 14 to 87 (LKDL…IRAS) and 128 to 261 (VLSK…LKKK). The Bipartite nuclear localization signal motif lies at 240 to 261 (KTKELEDQVENQRRIDQELKKK). The helical transmembrane segment at 313 to 330 (LWDKSGFKIVVSMSMLIL) threads the bilayer.

As to quaternary structure, forms homomers and heteromers with NEAP1 and NEAP2. Interacts with SUN1 and SUN2.

The protein localises to the nucleus inner membrane. It localises to the nucleus. The protein resides in the nucleoplasm. This is Nuclear envelope-associated protein 3 from Arabidopsis thaliana (Mouse-ear cress).